The primary structure comprises 641 residues: PWWP domain-containing DNA repair factor 3A (641 aa).

Positions 98–329 are disordered; sequence LNERQGSSSR…LEEDEDDEEP (232 aa). Residue Ser156 is modified to Phosphoserine. 2 stretches are compositionally biased toward basic and acidic residues: residues 194–203 and 295–307; these read QDREASRKQQ and ADTRPLEEARPLS. The residue at position 307 (Ser307) is a Phosphoserine. In terms of domain architecture, PWWP spans 343-404; it reads VGMLVWHKYQ…KHFDCKEKQA (62 aa). The disordered stretch occupies residues 463–486; that stretch reads TRFPQLSGGDPEEPVAGSPQGRRP.

The protein belongs to the PWWP3A family. Interacts with TP53BP1 (via BRCT domain); the interaction is not dependent on its phosphorylation status. Binds nucleosomes. Interacts with trimethylated 'Lys-36' of histone H3 (H3K36me3) (in vitro).

The protein resides in the nucleus. Its function is as follows. Involved in the DNA damage response pathway by contributing to the maintenance of chromatin architecture. Recruited to the vicinity of DNA breaks by TP53BP1 and plays an accessory role to facilitate damage-induced chromatin changes and promoting chromatin relaxation. Required for efficient DNA repair and cell survival following DNA damage. This chain is PWWP domain-containing DNA repair factor 3A (PWWP3A), found in Bos taurus (Bovine).